The sequence spans 98 residues: Beta-elicitin DRE-beta (98 aa).

Disulfide bonds link C3/C71, C27/C56, and C51/C95.

The protein belongs to the elicitin family.

The protein localises to the secreted. Its function is as follows. Induces local and distal defense responses (incompatible hypersensitive reaction) in plants from the solanaceae and cruciferae families. Elicits leaf necrosis and causes the accumulation of pathogenesis-related proteins. Might interact with the lipidic molecules of the plasma membrane. The sequence is that of Beta-elicitin DRE-beta from Phytophthora drechsleri.